The following is a 155-amino-acid chain: Cytochrome c oxidase subunit 4, mitochondrial (155 aa).

The transit peptide at 1–25 (MLSLRQSIRFFKPATRTLCSSRYLL) directs the protein to the mitochondrion. At Thr-55 the chain carries Phosphothreonine. Positions 111, 119, 134, and 137 each coordinate Zn(2+).

The protein belongs to the cytochrome c oxidase subunit 5B family. In terms of assembly, component of the cytochrome c oxidase (complex IV, CIV), a multisubunit enzyme composed of 12 subunits. The complex is composed of a catalytic core of 3 subunits COX1, COX2 and COX3, encoded in the mitochondrial DNA, and 9 supernumerary subunits COX4, COX5A (or COX5B), COX6, COX7, COX8, COX9, COX12, COX13 and COX26, which are encoded in the nuclear genome. The complex exists as a monomer or a dimer and forms supercomplexes (SCs) in the inner mitochondrial membrane with a dimer of ubiquinol-cytochrome c oxidoreductase (cytochrome b-c1 complex, complex III, CIII), resulting in 2 different assemblies (supercomplexes III(2)IV and III(2)IV(2)).

It is found in the mitochondrion inner membrane. The protein operates within energy metabolism; oxidative phosphorylation. Its function is as follows. Component of the cytochrome c oxidase, the last enzyme in the mitochondrial electron transport chain which drives oxidative phosphorylation. The respiratory chain contains 3 multisubunit complexes succinate dehydrogenase (complex II, CII), ubiquinol-cytochrome c oxidoreductase (cytochrome b-c1 complex, complex III, CIII) and cytochrome c oxidase (complex IV, CIV), that cooperate to transfer electrons derived from NADH and succinate to molecular oxygen, creating an electrochemical gradient over the inner membrane that drives transmembrane transport and the ATP synthase. Cytochrome c oxidase is the component of the respiratory chain that catalyzes the reduction of oxygen to water. Electrons originating from reduced cytochrome c in the intermembrane space (IMS) are transferred via the dinuclear copper A center (CU(A)) of COX2 and heme A of COX1 to the active site in COX1, a binuclear center (BNC) formed by heme A3 and copper B (CU(B)). The BNC reduces molecular oxygen to 2 water molecules using 4 electrons from cytochrome c in the IMS and 4 protons from the mitochondrial matrix. This chain is Cytochrome c oxidase subunit 4, mitochondrial (COX4), found in Saccharomyces cerevisiae (strain ATCC 204508 / S288c) (Baker's yeast).